The following is a 273-amino-acid chain: Undecaprenyl-diphosphatase (273 aa).

The next 7 helical transmembrane spans lie at 6–26 (SLLI…LPVS), 45–65 (AKTF…VMFW), 90–110 (LTLI…LVFH), 116–136 (LFNP…LIAA), 190–210 (YAAS…ATVL), 222–242 (ADIP…LIAI), and 252–272 (ISFI…YVVF).

This sequence belongs to the UppP family.

Its subcellular location is the cell inner membrane. It carries out the reaction di-trans,octa-cis-undecaprenyl diphosphate + H2O = di-trans,octa-cis-undecaprenyl phosphate + phosphate + H(+). Catalyzes the dephosphorylation of undecaprenyl diphosphate (UPP). Confers resistance to bacitracin. This chain is Undecaprenyl-diphosphatase, found in Salmonella paratyphi C (strain RKS4594).